The primary structure comprises 164 residues: Ribosome maturation factor RimM (164 aa).

In terms of domain architecture, PRC barrel spans 90–161; that stretch reads KGSYFIADLI…TVTIKPLEIW (72 aa).

It belongs to the RimM family. Binds ribosomal protein uS19.

Its subcellular location is the cytoplasm. Functionally, an accessory protein needed during the final step in the assembly of 30S ribosomal subunit, possibly for assembly of the head region. Essential for efficient processing of 16S rRNA. May be needed both before and after RbfA during the maturation of 16S rRNA. It has affinity for free ribosomal 30S subunits but not for 70S ribosomes. This chain is Ribosome maturation factor RimM, found in Clostridium botulinum (strain Hall / ATCC 3502 / NCTC 13319 / Type A).